The sequence spans 250 residues: Manganese transport system ATP-binding protein MntB (250 aa).

Positions 5-236 (VKVDNLSVFY…MVAKTYQGNL (232 aa)) constitute an ABC transporter domain. 37 to 44 (GPNGAGKS) lines the ATP pocket.

This sequence belongs to the ABC transporter superfamily.

The protein resides in the cell membrane. This protein is probably a component of a manganese permease, a binding protein-dependent, ATP-driven transport system. Probably responsible for energy coupling to the transport system. In Halalkalibacterium halodurans (strain ATCC BAA-125 / DSM 18197 / FERM 7344 / JCM 9153 / C-125) (Bacillus halodurans), this protein is Manganese transport system ATP-binding protein MntB (mntB).